We begin with the raw amino-acid sequence, 868 residues long: Aconitate hydratase B (868 aa).

Substrate is bound by residues Arg192, 235–237, 404–406, and Ser488; these read SSR and QDT. Residues Cys700, Cys758, and Cys761 each coordinate [4Fe-4S] cluster. Positions 780 and 785 each coordinate substrate.

It belongs to the aconitase/IPM isomerase family. Monomer. It depends on [4Fe-4S] cluster as a cofactor.

The catalysed reaction is citrate = D-threo-isocitrate. It carries out the reaction (2S,3R)-3-hydroxybutane-1,2,3-tricarboxylate = 2-methyl-cis-aconitate + H2O. The protein operates within carbohydrate metabolism; tricarboxylic acid cycle; isocitrate from oxaloacetate: step 2/2. It participates in organic acid metabolism; propanoate degradation. Functionally, involved in the catabolism of short chain fatty acids (SCFA) via the tricarboxylic acid (TCA)(acetyl degradation route) and probably via the 2-methylcitrate cycle I (propionate degradation route). Catalyzes the reversible isomerization of citrate to isocitrate via cis-aconitate. Catalyzes the hydration of 2-methyl-cis-aconitate to yield (2R,3S)-2-methylisocitrate. The apo form of AcnB functions as a RNA-binding regulatory protein. The polypeptide is Aconitate hydratase B (acnB) (Synechocystis sp. (strain ATCC 27184 / PCC 6803 / Kazusa)).